The chain runs to 32 residues: Sodium channel neurotoxin BmK NT2 (32 aa).

Positions 2 to 32 (RDAYIAKPENCVYHCAGNEGCNNLCTCNGAT) constitute an LCN-type CS-alpha/beta domain.

As to expression, expressed by the venom gland.

It localises to the secreted. Alpha toxins bind voltage-independently at site-3 of sodium channels (Nav) and inhibit the inactivation of the activated channels, thereby blocking neuronal transmission. This toxin dose-dependently delays inactivation of voltage-gated sodium channels (Nav) (EC(50)=0.91 uM), and shifts the steady-state activation and inactivation to hyperpolarized direction. In addition, it dose-dependently alters calcium dynamics and increases phosphorylation of MAP kinases 1/3 (MAPK1/MAPK3) and cAMP-response element binding (CREB) proteins in neocortical neurons. This effect is eliminated by tetrodotoxin, a Nav blocker. This is Sodium channel neurotoxin BmK NT2 from Olivierus martensii (Manchurian scorpion).